Consider the following 490-residue polypeptide: Cytochrome P450 2C1 (490 aa).

Cys435 serves as a coordination point for heme.

Belongs to the cytochrome P450 family. Requires heme as cofactor.

Its subcellular location is the endoplasmic reticulum membrane. It is found in the microsome membrane. The catalysed reaction is an organic molecule + reduced [NADPH--hemoprotein reductase] + O2 = an alcohol + oxidized [NADPH--hemoprotein reductase] + H2O + H(+). Its function is as follows. Cytochromes P450 are a group of heme-thiolate monooxygenases. In liver microsomes, this enzyme is involved in an NADPH-dependent electron transport pathway. It oxidizes a variety of structurally unrelated compounds, including steroids, fatty acids, and xenobiotics. In Oryctolagus cuniculus (Rabbit), this protein is Cytochrome P450 2C1 (CYP2C1).